Reading from the N-terminus, the 640-residue chain is Threonine--tRNA ligase (640 aa).

Residues 1-61 (MPTITLPDGS…ENDASLQIIT (61 aa)) enclose the TGS domain. The tract at residues 242–533 (DHRKIGKRLG…LIEHYEGAFP (292 aa)) is catalytic. The Zn(2+) site is built by C333, H384, and H510.

This sequence belongs to the class-II aminoacyl-tRNA synthetase family. Homodimer. The cofactor is Zn(2+).

It is found in the cytoplasm. It carries out the reaction tRNA(Thr) + L-threonine + ATP = L-threonyl-tRNA(Thr) + AMP + diphosphate + H(+). Its function is as follows. Catalyzes the attachment of threonine to tRNA(Thr) in a two-step reaction: L-threonine is first activated by ATP to form Thr-AMP and then transferred to the acceptor end of tRNA(Thr). Also edits incorrectly charged L-seryl-tRNA(Thr). This Pseudomonas savastanoi pv. phaseolicola (strain 1448A / Race 6) (Pseudomonas syringae pv. phaseolicola (strain 1448A / Race 6)) protein is Threonine--tRNA ligase.